The chain runs to 155 residues: Immunoglobulin domain-containing protein oig-4 (155 aa).

Residues 1–22 (MSFRLWGRCIFFFCFLLEAIDS) form the signal peptide. Residues Asn-55 and Asn-114 are each glycosylated (N-linked (GlcNAc...) asparagine). Residues 73 to 154 (GYKLLIICKA…MAKNFKAEYT (82 aa)) form the Ig-like C2-type domain. Residues Cys-80 and Cys-136 are joined by a disulfide bond.

In terms of assembly, interacts with the non-alpha subunit of nicotinic acetylcholine receptor unc-29 and lev-10 to stabilize the complex formed between unc-29 and lev-10. As to expression, expressed in body wall muscle cells, the pharyngeal muscle cell pm6 and in four head neurons.

It is found in the synapse. It localises to the secreted. Its function is as follows. Required for the localization of acetylcholine receptors at neuromuscular junctions and for subsequently controlling the response evoked by receptor stimulation. The protein is Immunoglobulin domain-containing protein oig-4 of Caenorhabditis elegans.